The chain runs to 289 residues: CCR4-associated factor 16 (289 aa).

The ABC transporter domain occupies 7-249 (IEVRNLTYKF…SEVVNAKVNG (243 aa)). 41–48 (GANGAGKS) provides a ligand contact to ATP.

It belongs to the ABC transporter superfamily. Interacts with CCR4 and SSN2.

The protein localises to the cytoplasm. The protein resides in the nucleus. The chain is CCR4-associated factor 16 (CAF16) from Saccharomyces cerevisiae (strain ATCC 204508 / S288c) (Baker's yeast).